Reading from the N-terminus, the 409-residue chain is MEYSEEGWMDQADSFPPRLLAIFFALFDPLQGPIVACEAPAGSVTNVDGGKNCLLPFETISDYVIPKRELCNKTITVCTNHYQVIGHPISIIGSNYERNALIFNMCMIFHEEEDSACYIPLVKRLARNLEVLEKQIHYISDLNKRPVIFSVIEQILEDMNNFCECMIQLDDQNSINIKLFPVFPSPPTVKSFHVPILTAQLDLLMDKNWDMTVQKVYPFINGINSVQRIAELANVSYRSCQKCMEHFLYYGCLIIADIFQFHNIYAMTTNAPNLLQDPDFQRECTAYVSTNSSNAKNVTFATIFKLYCSLRQGLRVKDWMNENKEIFKGLDVRRLISFGTIKGLIYRVHKYPYLERRTMRNNLTEEEKKLLGLLDGKHHFDELCVTLKKSPKVVNEMIAGLGDACFIYV.

This sequence belongs to the NPR2 family.

It is found in the cytoplasm. The protein resides in the nucleus. Its function is as follows. Mediates inactivation of the TORC1 complex in response to amino acid starvation. Post-transcriptional regulator of nitrogen permeases. This is Nitrogen permease regulator 2 homolog from Schizosaccharomyces pombe (strain 972 / ATCC 24843) (Fission yeast).